The sequence spans 493 residues: Glutamate--tRNA ligase (493 aa).

Positions 9 to 19 match the 'HIGH' region motif; it reads PSPTGDPHVGT. The 'KMSKS' region signature appears at 249 to 253; that stretch reads KLSKR. Position 252 (Lys-252) interacts with ATP.

Belongs to the class-I aminoacyl-tRNA synthetase family. Glutamate--tRNA ligase type 1 subfamily. In terms of assembly, monomer.

The protein localises to the cytoplasm. It catalyses the reaction tRNA(Glu) + L-glutamate + ATP = L-glutamyl-tRNA(Glu) + AMP + diphosphate. Its function is as follows. Catalyzes the attachment of glutamate to tRNA(Glu) in a two-step reaction: glutamate is first activated by ATP to form Glu-AMP and then transferred to the acceptor end of tRNA(Glu). The polypeptide is Glutamate--tRNA ligase (Marinobacter nauticus (strain ATCC 700491 / DSM 11845 / VT8) (Marinobacter aquaeolei)).